The chain runs to 146 residues: MKRLLILTALLPFVGFAQPINTLNNPNQPGYQIPSQQRMQTQMQTQQIQQKGMLNQQLKTQTQLQQQHLENQINNNSQRVLQSQPGERNPARQQMLPNTNGGMLNSNRNPDSSLNQQHMLPERRNGDMLNQPSTPQPDIPLKTIGP.

The N-terminal stretch at 1–17 (MKRLLILTALLPFVGFA) is a signal peptide. Disordered stretches follow at residues 27–54 (NQPG…KGML) and 70–146 (ENQI…TIGP). Residues 32–54 (QIPSQQRMQTQMQTQQIQQKGML) show a composition bias toward low complexity. Residues 77–118 (SQRVLQSQPGERNPARQQMLPNTNGGMLNSNRNPDSSLNQQH) are compositionally biased toward polar residues.

This is an uncharacterized protein from Escherichia coli (strain K12).